The sequence spans 220 residues: Small ribosomal subunit protein uS3 (220 aa).

Positions 38–106 (IRNFINKKLQ…QVHINIVEIK (69 aa)) constitute a KH type-2 domain.

It belongs to the universal ribosomal protein uS3 family. Part of the 30S ribosomal subunit. Forms a tight complex with proteins S10 and S14.

Binds the lower part of the 30S subunit head. Binds mRNA in the 70S ribosome, positioning it for translation. The chain is Small ribosomal subunit protein uS3 from Lacticaseibacillus paracasei (strain ATCC 334 / BCRC 17002 / CCUG 31169 / CIP 107868 / KCTC 3260 / NRRL B-441) (Lactobacillus paracasei).